The primary structure comprises 278 residues: WIMGHMVNAVKQIPTSLDLGANALEMDVTFKNEEPTYTYHGVPCDAFRDCIRWEYFNVFAKTLREYTTPGFDKYREQLILLVFDLKTGDMNNAQARTAGVNTAKQLLQYYWNNDNNGGRAYVVLSIPDIAQHELIKGFKETLKKEGHENLLDKVGYDFSGPYLPRLPTLDETHEAFKKAGVEGHVWLSDGLTNFSPLGDMARLKEAIKSRDSANGFINKIYYWSVDKVSTVEKALKVGVDGIMTNHPDVIIGVLNENGFKDKYRLATYDDNPWETFGK.

Histidine 5 is an active-site residue. Positions 25 and 27 each coordinate Mg(2+). The active-site Nucleophile is histidine 40. A disulfide bridge connects residues cysteine 44 and cysteine 50. Position 84 (aspartate 84) interacts with Mg(2+).

Belongs to the arthropod phospholipase D family. Class I subfamily. Mg(2+) serves as cofactor. In terms of tissue distribution, expressed by the venom gland.

The protein localises to the secreted. The enzyme catalyses an N-(acyl)-sphingosylphosphocholine = an N-(acyl)-sphingosyl-1,3-cyclic phosphate + choline. It catalyses the reaction an N-(acyl)-sphingosylphosphoethanolamine = an N-(acyl)-sphingosyl-1,3-cyclic phosphate + ethanolamine. The catalysed reaction is a 1-acyl-sn-glycero-3-phosphocholine = a 1-acyl-sn-glycero-2,3-cyclic phosphate + choline. It carries out the reaction a 1-acyl-sn-glycero-3-phosphoethanolamine = a 1-acyl-sn-glycero-2,3-cyclic phosphate + ethanolamine. In terms of biological role, dermonecrotic toxins cleave the phosphodiester linkage between the phosphate and headgroup of certain phospholipids (sphingolipid and lysolipid substrates), forming an alcohol (often choline) and a cyclic phosphate. This toxin acts on sphingomyelin (SM). It may also act on ceramide phosphoethanolamine (CPE), lysophosphatidylcholine (LPC) and lysophosphatidylethanolamine (LPE), but not on lysophosphatidylserine (LPS), and lysophosphatidylglycerol (LPG). It acts by transphosphatidylation, releasing exclusively cyclic phosphate products as second products. Induces dermonecrosis, hemolysis, increased vascular permeability, edema, inflammatory response, and platelet aggregation. The polypeptide is Dermonecrotic toxin Ls4SicTox-alphaIII1ii (Loxosceles sp. (strain 4 GJB-2008) (Recluse spider)).